A 925-amino-acid polypeptide reads, in one-letter code: ETO1-like protein 2 (925 aa).

The BTB domain occupies 207 to 307; sequence SDISFCVGSE…ECEARLAASV (101 aa). One copy of the TPR 1 repeat lies at 409–442; the sequence is ALSLHQMGCVLFERKDYKAAQFHFRLASSLGHVY. The stretch at 509–533 forms a coiled coil; that stretch reads KYRAVMKFEQKQIKEAFQEIDRLIQ. TPR repeat units lie at residues 538–571, 664–697, 738–771, 773–803, 834–867, and 869–900; these read PECLELRAWLYLATGDRESCLRDLRAVLSLEPNY, AERLVYEGWLLYDMGYVEETLTKAEEAISIQRSF, GQALNNLGSIYINLGMLDQAETAYKNAIEIKHIR, RQGLARVYFLKNQRKEACEEMTKLIEKSCSK, TYPYRYRAAVLMDDQRETEAVEELSKAIAFRPEL, and TLHLRAAFHEATGNLSLATQDCEAALCLDPNH.

This sequence belongs to the ETO1 family. Interacts with the C-terminal domain of ACS5. In terms of tissue distribution, constitutively expressed in green and etiolated seedlings.

It functions in the pathway protein modification; protein ubiquitination. Potential regulator of the ethylene pathway, which acts by regulating the stability of 1-aminocyclopropane-1-carboxylate synthase (ACS) enzymes. May act as a substrate-specific adapter that connects ACS enzymes, such as ACS5, to ubiquitin ligase complexes, leading to proteasomal degradation of ACS enzymes. The polypeptide is ETO1-like protein 2 (EOL2) (Arabidopsis thaliana (Mouse-ear cress)).